The following is a 561-amino-acid chain: Oligo-1,6-glucosidase (561 aa).

Asp-199 functions as the Nucleophile in the catalytic mechanism. The Proton donor role is filled by Glu-256.

Belongs to the glycosyl hydrolase 13 family.

Its subcellular location is the cytoplasm. The enzyme catalyses Hydrolysis of (1-&gt;6)-alpha-D-glucosidic linkages in some oligosaccharides produced from starch and glycogen by alpha-amylase, and in isomaltose.. The polypeptide is Oligo-1,6-glucosidase (malL) (Halalkalibacterium halodurans (strain ATCC BAA-125 / DSM 18197 / FERM 7344 / JCM 9153 / C-125) (Bacillus halodurans)).